We begin with the raw amino-acid sequence, 535 residues long: Light-independent protochlorophyllide reductase subunit B (535 aa).

Residue Asp-36 coordinates [4Fe-4S] cluster. The active-site Proton donor is Asp-292. 428-429 (GL) lines the substrate pocket. The segment at 446-483 (DEASPSESAPHASNGHEDVAGGSTAQSVPSHAATEGDG) is disordered.

Belongs to the ChlB/BchB/BchZ family. Protochlorophyllide reductase is composed of three subunits; BchL, BchN and BchB. Forms a heterotetramer of two BchB and two BchN subunits. Requires [4Fe-4S] cluster as cofactor.

It carries out the reaction chlorophyllide a + oxidized 2[4Fe-4S]-[ferredoxin] + 2 ADP + 2 phosphate = protochlorophyllide a + reduced 2[4Fe-4S]-[ferredoxin] + 2 ATP + 2 H2O. Its pathway is porphyrin-containing compound metabolism; bacteriochlorophyll biosynthesis (light-independent). Functionally, component of the dark-operative protochlorophyllide reductase (DPOR) that uses Mg-ATP and reduced ferredoxin to reduce ring D of protochlorophyllide (Pchlide) to form chlorophyllide a (Chlide). This reaction is light-independent. The NB-protein (BchN-BchB) is the catalytic component of the complex. In Chlorobium limicola (strain DSM 245 / NBRC 103803 / 6330), this protein is Light-independent protochlorophyllide reductase subunit B.